Consider the following 195-residue polypeptide: Imidazoleglycerol-phosphate dehydratase (195 aa).

This sequence belongs to the imidazoleglycerol-phosphate dehydratase family.

Its subcellular location is the cytoplasm. It carries out the reaction D-erythro-1-(imidazol-4-yl)glycerol 3-phosphate = 3-(imidazol-4-yl)-2-oxopropyl phosphate + H2O. Its pathway is amino-acid biosynthesis; L-histidine biosynthesis; L-histidine from 5-phospho-alpha-D-ribose 1-diphosphate: step 6/9. The polypeptide is Imidazoleglycerol-phosphate dehydratase (Sphingopyxis alaskensis (strain DSM 13593 / LMG 18877 / RB2256) (Sphingomonas alaskensis)).